Reading from the N-terminus, the 804-residue chain is Pentatricopeptide repeat-containing protein At4g35130, chloroplastic (804 aa).

The transit peptide at 1–19 (MAATLLSQCYRIYNSDACK) directs the protein to the chloroplast. 16 PPR repeats span residues 63-93 (NDPALTRALRGFADSRLMEDALQLFDEMNKA), 94-128 (DAFLWNVMIKGFTSCGLYIEAVQFYSRMVFAGVKA), 129-163 (DTFTYPFVIKSVAGISSLEEGKKIHAMVIKLGFVS), 164-194 (DVYVCNSLISLYMKLGCAWDAEKVFEEMPER), 195-229 (DIVSWNSMISGYLALGDGFSSLMLFKEMLKCGFKP), 230-264 (DRFSTMSALGACSHVYSPKMGKEIHCHAVRSRIET), 266-296 (DVMVMTSILDMYSKYGEVSYAERIFNGMIQR), 297-332 (NIVAWNVMIGCYARNGRVTDAFLCFQKMSEQNGLQP), 333-363 (DVITSINLLPASAILEGRTIHGYAMRRGFLP), 364-394 (HMVLETALIDMYGECGQLKSAEVIFDRMAEK), 395-429 (NVISWNSIIAAYVQNGKNYSALELFQELWDSSLVP), 430-464 (DSTTIASILPAYAESLSLSEGREIHAYIVKSRYWS), 465-495 (NTIILNSLVHMYAMCGDLEDARKCFNHILLK), 496-530 (DVVSWNSIIMAYAVHGFGRISVWLFSEMIASRVNP), 531-561 (NKSTFASLLAACSISGMVDEGWEYFESMKRE), and 567-597 (GIEHYGCMLDLIGRTGNFSAAKRFLEEMPFV). Residues 602–677 (IWGSLLNASR…TSSRSTVEAK (76 aa)) form a type E motif region. The type E(+) motif stretch occupies residues 678 to 708 (GKSHVFTNGDRSHVATNKIYEVLDVVSRMVG). The segment at 710-804 (EDIYVHCVSR…NGRCSCGNYW (95 aa)) is type DYW motif.

Belongs to the PPR family. PCMP-H subfamily.

Its subcellular location is the plastid. It is found in the chloroplast. This Arabidopsis thaliana (Mouse-ear cress) protein is Pentatricopeptide repeat-containing protein At4g35130, chloroplastic (PCMP-H27).